The chain runs to 293 residues: Elongation factor Ts (293 aa).

Residues 79-82 (TDFV) are involved in Mg(2+) ion dislocation from EF-Tu.

It belongs to the EF-Ts family.

It is found in the cytoplasm. In terms of biological role, associates with the EF-Tu.GDP complex and induces the exchange of GDP to GTP. It remains bound to the aminoacyl-tRNA.EF-Tu.GTP complex up to the GTP hydrolysis stage on the ribosome. This is Elongation factor Ts from Bacillus licheniformis (strain ATCC 14580 / DSM 13 / JCM 2505 / CCUG 7422 / NBRC 12200 / NCIMB 9375 / NCTC 10341 / NRRL NRS-1264 / Gibson 46).